A 282-amino-acid polypeptide reads, in one-letter code: tRNA N(3)-cytidine methyltransferase METTL6 (282 aa).

Positions 45, 49, 87, 110, 136, 137, and 157 each coordinate S-adenosyl-L-methionine.

The protein belongs to the methyltransferase superfamily. METL family. Monomer. Interacts with SARS1/SerRS; interaction is mediated via tRNA(Ser) and is required for N(3)-methylcytidine methylation.

It is found in the cytoplasm. It localises to the nucleus. It catalyses the reaction cytidine(32) in tRNA(Ser) + S-adenosyl-L-methionine = N(3)-methylcytidine(32) in tRNA(Ser) + S-adenosyl-L-homocysteine + H(+). S-adenosyl-L-methionine-dependent methyltransferase that mediates N(3)-methylcytidine modification of residue 32 of the tRNA anticodon loop of tRNA(Ser), including tRNA(Ser)(UGA) and tRNA(Ser)(GCU). Interaction with SARS1/SerRS is required for N(3)-methylcytidine methylation. In Pongo abelii (Sumatran orangutan), this protein is tRNA N(3)-cytidine methyltransferase METTL6 (METTL6).